The primary structure comprises 153 residues: Large ribosomal subunit protein uL22 (153 aa).

It belongs to the universal ribosomal protein uL22 family. Part of the 50S ribosomal subunit.

Its function is as follows. This protein binds specifically to 23S rRNA. It makes multiple contacts with different domains of the 23S rRNA in the assembled 50S subunit and ribosome. Functionally, the globular domain of the protein is located near the polypeptide exit tunnel on the outside of the subunit, while an extended beta-hairpin is found that lines the wall of the exit tunnel in the center of the 70S ribosome. This Methanoculleus marisnigri (strain ATCC 35101 / DSM 1498 / JR1) protein is Large ribosomal subunit protein uL22.